We begin with the raw amino-acid sequence, 716 residues long: Probable extracellular serine carboxypeptidase (716 aa).

Positions 1–17 (MVKLTACLLLLVAAVQA) are cleaved as a signal peptide. Residues N143 and N174 are each glycosylated (N-linked (GlcNAc...) asparagine). Catalysis depends on S188, which acts as the Charge relay system. N-linked (GlcNAc...) asparagine glycosylation is found at N258 and N354. D466 (charge relay system) is an active-site residue. N507 and N550 each carry an N-linked (GlcNAc...) asparagine glycan. Residues 617–636 (RDLAAQPSKSKKDRRGQQLS) form a disordered region. Residues 652–672 (LGFVSFLVFAFSSFTFIPDIE) form a helical membrane-spanning segment.

This sequence belongs to the peptidase S28 family.

It localises to the membrane. The protein resides in the secreted. The sequence is that of Probable extracellular serine carboxypeptidase from Arthroderma benhamiae (strain ATCC MYA-4681 / CBS 112371) (Trichophyton mentagrophytes).